A 327-amino-acid chain; its full sequence is RNA ligase 1 (327 aa).

The cofactor is Mg(2+). Mn(2+) serves as cofactor. Post-translationally, AMPylates itself (auto-AMPylation).

It carries out the reaction ATP + (ribonucleotide)n-3'-hydroxyl + 5'-phospho-(ribonucleotide)m = (ribonucleotide)n+m + AMP + diphosphate.. Functionally, functions as an RNA ligase, in vitro. The ligation reaction entails three nucleotidyl transfer steps. In the first step, the RNA ligase reacts with ATP in the absence of nucleic acid to form a covalent ligase-AMP intermediate and release pyrophosphate. In step 2, the ligase-AMP binds to the nucleic acid and transfers the adenylate to the 5'-PO4 terminus to form an adenylylated intermediate. In step 3, the RNA ligase directs the attack of the 3'-OH on the 5'-phosphoanhydride linkage, resulting in a repaired 3'-5' phosphodiester and release of AMP. Exhibits selectivity for single-stranded RNA substrates and may not have nick-sealing activity on double-stranded DNA-RNA hybrids. May play a role in maintaining RNA integrity under stress conditions, for example in response to reactive oxygen species (ROS). This is RNA ligase 1 from Mus musculus (Mouse).